The following is a 312-amino-acid chain: tRNA-dihydrouridine(16) synthase (312 aa).

Residues 7–9 (PMQ) and glutamine 68 each bind FMN. Cysteine 98 acts as the Proton donor in catalysis. FMN is bound by residues lysine 139, 200-202 (NGE), and 224-225 (GR).

This sequence belongs to the Dus family. DusC subfamily. It depends on FMN as a cofactor.

It carries out the reaction 5,6-dihydrouridine(16) in tRNA + NADP(+) = uridine(16) in tRNA + NADPH + H(+). It catalyses the reaction 5,6-dihydrouridine(16) in tRNA + NAD(+) = uridine(16) in tRNA + NADH + H(+). In terms of biological role, catalyzes the synthesis of 5,6-dihydrouridine (D), a modified base found in the D-loop of most tRNAs, via the reduction of the C5-C6 double bond in target uridines. Specifically modifies U16 in tRNAs. The sequence is that of tRNA-dihydrouridine(16) synthase from Pasteurella multocida (strain Pm70).